Consider the following 1387-residue polypeptide: DNA-directed RNA polymerase subunit beta'' (1387 aa).

4 residues coordinate Zn(2+): Cys224, Cys295, Cys302, and Cys305. The tract at residues 883–903 (SHTGKRNDPAGSGLIPDNGSD) is disordered.

The protein belongs to the RNA polymerase beta' chain family. RpoC2 subfamily. As to quaternary structure, in plastids the minimal PEP RNA polymerase catalytic core is composed of four subunits: alpha, beta, beta', and beta''. When a (nuclear-encoded) sigma factor is associated with the core the holoenzyme is formed, which can initiate transcription. Requires Zn(2+) as cofactor.

The protein localises to the plastid. Its subcellular location is the chloroplast. The enzyme catalyses RNA(n) + a ribonucleoside 5'-triphosphate = RNA(n+1) + diphosphate. Functionally, DNA-dependent RNA polymerase catalyzes the transcription of DNA into RNA using the four ribonucleoside triphosphates as substrates. The polypeptide is DNA-directed RNA polymerase subunit beta'' (Platanus occidentalis (Sycamore)).